Reading from the N-terminus, the 316-residue chain is Coproporphyrin III ferrochelatase (316 aa).

Fe-coproporphyrin III-binding positions include Tyr-13, Arg-30, 46–47 (RY), Ser-54, and Tyr-125. The Fe(2+) site is built by His-183 and Glu-264.

This sequence belongs to the ferrochelatase family.

The protein localises to the cytoplasm. It carries out the reaction Fe-coproporphyrin III + 2 H(+) = coproporphyrin III + Fe(2+). The protein operates within porphyrin-containing compound metabolism; protoheme biosynthesis. Functionally, involved in coproporphyrin-dependent heme b biosynthesis. Catalyzes the insertion of ferrous iron into coproporphyrin III to form Fe-coproporphyrin III. This chain is Coproporphyrin III ferrochelatase, found in Geobacillus thermodenitrificans (strain NG80-2).